The chain runs to 491 residues: Glutamyl-tRNA(Gln) amidotransferase subunit A (491 aa).

Active-site charge relay system residues include lysine 79 and serine 154. Residue serine 178 is the Acyl-ester intermediate of the active site.

It belongs to the amidase family. GatA subfamily. Heterotrimer of A, B and C subunits.

The catalysed reaction is L-glutamyl-tRNA(Gln) + L-glutamine + ATP + H2O = L-glutaminyl-tRNA(Gln) + L-glutamate + ADP + phosphate + H(+). Its function is as follows. Allows the formation of correctly charged Gln-tRNA(Gln) through the transamidation of misacylated Glu-tRNA(Gln) in organisms which lack glutaminyl-tRNA synthetase. The reaction takes place in the presence of glutamine and ATP through an activated gamma-phospho-Glu-tRNA(Gln). The protein is Glutamyl-tRNA(Gln) amidotransferase subunit A of Natranaerobius thermophilus (strain ATCC BAA-1301 / DSM 18059 / JW/NM-WN-LF).